Consider the following 400-residue polypeptide: Formate-dependent phosphoribosylglycinamide formyltransferase (400 aa).

N(1)-(5-phospho-beta-D-ribosyl)glycinamide contacts are provided by residues 22-23 (EL) and Glu-82. ATP contacts are provided by residues Arg-115, Lys-157, 162–167 (SSGKGQ), 197–200 (EGFV), and Glu-205. The 196-residue stretch at 120-315 (RLAAETLGVP…EFELHARAIL (196 aa)) folds into the ATP-grasp domain. 2 residues coordinate Mg(2+): Glu-274 and Glu-286. N(1)-(5-phospho-beta-D-ribosyl)glycinamide contacts are provided by residues Asp-293, Lys-362, and 369–370 (RR).

This sequence belongs to the PurK/PurT family. As to quaternary structure, homodimer.

The enzyme catalyses N(1)-(5-phospho-beta-D-ribosyl)glycinamide + formate + ATP = N(2)-formyl-N(1)-(5-phospho-beta-D-ribosyl)glycinamide + ADP + phosphate + H(+). Its pathway is purine metabolism; IMP biosynthesis via de novo pathway; N(2)-formyl-N(1)-(5-phospho-D-ribosyl)glycinamide from N(1)-(5-phospho-D-ribosyl)glycinamide (formate route): step 1/1. Functionally, involved in the de novo purine biosynthesis. Catalyzes the transfer of formate to 5-phospho-ribosyl-glycinamide (GAR), producing 5-phospho-ribosyl-N-formylglycinamide (FGAR). Formate is provided by PurU via hydrolysis of 10-formyl-tetrahydrofolate. The sequence is that of Formate-dependent phosphoribosylglycinamide formyltransferase from Mycolicibacterium smegmatis (strain ATCC 700084 / mc(2)155) (Mycobacterium smegmatis).